An 831-amino-acid chain; its full sequence is uncharacterized protein (831 aa).

Catalysis depends on His787, which acts as the Tele-phosphohistidine intermediate.

The protein belongs to the PEP-utilizing enzyme family.

This is an uncharacterized protein from Bacillus subtilis (strain 168).